A 149-amino-acid polypeptide reads, in one-letter code: Arginine repressor (149 aa).

This sequence belongs to the ArgR family.

The protein localises to the cytoplasm. Its pathway is amino-acid biosynthesis; L-arginine biosynthesis [regulation]. In terms of biological role, regulates arginine biosynthesis genes. In Geobacillus thermodenitrificans (strain NG80-2), this protein is Arginine repressor.